Reading from the N-terminus, the 1060-residue chain is DNA topoisomerase 1 (1060 aa).

The region spanning 1–141 (MILVIAEKPN…KRMKFSALTK (141 aa)) is the Toprim domain. Mg(2+) is bound by residues glutamate 7 and aspartate 107. Residues 156–947 (NFGMANAGIA…EAKIRLTKIL (792 aa)) form the Topo IA-type catalytic domain. Residues 196–201 (STGRVQ) are interaction with DNA. One can recognise a DOD-type homing endonuclease domain in the interval 482-591 (LIGYLAGKGG…IKVYLQLLGI (110 aa)). Tyrosine 690 acts as the O-(5'-phospho-DNA)-tyrosine intermediate in catalysis. The segment at 978–1006 (CPKCGGDLIVKYNEKTGKRFVGCSNWPKC) adopts a C4-type 1 zinc-finger fold. The segment at 1025–1050 (CCNGAPVVIIREKDGREWEICLDMNC) adopts a C4-type 2; atypical zinc-finger fold.

It belongs to the type IA topoisomerase family. In terms of assembly, monomer. Mg(2+) is required as a cofactor. In terms of processing, this protein undergoes a protein self splicing that involves a post-translational excision of the intervening region (intein) followed by peptide ligation.

The enzyme catalyses ATP-independent breakage of single-stranded DNA, followed by passage and rejoining.. Functionally, releases the supercoiling and torsional tension of DNA, which is introduced during the DNA replication and transcription, by transiently cleaving and rejoining one strand of the DNA duplex. Introduces a single-strand break via transesterification at a target site in duplex DNA. The scissile phosphodiester is attacked by the catalytic tyrosine of the enzyme, resulting in the formation of a DNA-(5'-phosphotyrosyl)-enzyme intermediate and the expulsion of a 3'-OH DNA strand. The free DNA strand then undergoes passage around the unbroken strand, thus removing DNA supercoils. Finally, in the religation step, the DNA 3'-OH attacks the covalent intermediate to expel the active-site tyrosine and restore the DNA phosphodiester backbone. This chain is DNA topoisomerase 1 (topA), found in Pyrococcus furiosus (strain ATCC 43587 / DSM 3638 / JCM 8422 / Vc1).